The following is a 237-amino-acid chain: Probable F-box protein At1g53815 (237 aa).

An F-box domain is found at 41–72 (ISNILSRLPLKSKAKCRCVSKLWSSIIRRPNY).

In Arabidopsis thaliana (Mouse-ear cress), this protein is Probable F-box protein At1g53815.